The following is a 244-amino-acid chain: MAAAASPAFLLCLPLLHLLSGWSRAGWVDTHCLCYDFIITPKSRPEPQWCEVQGLVDERPFLHYDCVNHKAKAFASLGKKVNVTKTWEEQTETLRDVVDFLKGQLLDIQVENLIPIEPLTLQARMSCEHEAHGHGRGSWQFLFNGQKFLLFDSNNRKWTALHPGAKKMTEKWEKNRDVTMFFQKISLGDCKMWLEEFLMYWEQMLDPTKPPSLAPGTTQPKAMATTLSPWSLLIIFLCFILAGR.

Residues 1–25 (MAAAASPAFLLCLPLLHLLSGWSRA) form the signal peptide. Residues 26–117 (GWVDTHCLCY…IQVENLIPIE (92 aa)) are MHC class I alpha-1 like. Cys50 and Cys66 form a disulfide bridge. N-linked (GlcNAc...) asparagine glycosylation occurs at Asn82. The tract at residues 118-208 (PLTLQARMSC…MYWEQMLDPT (91 aa)) is MHC class I alpha-2 like. Cysteines 127 and 190 form a disulfide. Residue Gly216 is the site of GPI-anchor amidated glycine attachment. Positions 217–244 (TTQPKAMATTLSPWSLLIIFLCFILAGR) are cleaved as a propeptide — removed in mature form.

The protein belongs to the MHC class I family. In terms of assembly, interacts with KLRK1/NKG2D. Does not bind to beta2-microglobulin. (Microbial infection) In CMV-infected cells, interacts with the viral glycoprotein UL16; this interaction causes ULBP1 retention in the endoplasmic reticulum and cis-Golgi and prevents binding to and activation of KLRK1/NKG2D, providing CMV with an immune evasion mechanism. As to expression, expressed in T-cells, B-cells, erythroleukemia cell lines and in a wide range of tissues including heart, brain, lung, liver, testis, lymph node, thymus, tonsil and bone marrow. Also found in fetal heart, brain, lung and liver.

It localises to the cell membrane. The protein resides in the endoplasmic reticulum. Its function is as follows. Binds and activates the KLRK1/NKG2D receptor, mediating natural killer cell cytotoxicity. In Homo sapiens (Human), this protein is UL16-binding protein 1 (ULBP1).